A 147-amino-acid polypeptide reads, in one-letter code: MVHFTAEEKTAITSVWGKVNVEETGGEALGRLLVVYPWTQRFFDSFGNLSSASAILGNPKVKAHGKKVLTSLGEAVKNLDNLKATFSKLSELHCDKLHVDPENFRLLGNVLVVVLAVHFGKEFTPEVHAAWQKLVAGVASALAHKYH.

Residues 3 to 147 (HFTAEEKTAI…VASALAHKYH (145 aa)) form the Globin domain. Ser-14 and Ser-51 each carry phosphoserine. Residues His-64 and His-93 each contribute to the heme b site.

Belongs to the globin family. In terms of tissue distribution, red blood cells.

Functionally, hemoglobin epsilon chain is an embryonic-type beta-type chain found in prenatal and neonatal marsupials. This chain is Hemoglobin subunit epsilon (HBE1), found in Notamacropus eugenii (Tammar wallaby).